The chain runs to 132 residues: Ribosome-binding factor A (132 aa).

Residues 113-132 are disordered; that stretch reads EANSTRAKDDDEADAPAKDD.

The protein belongs to the RbfA family. Monomer. Binds 30S ribosomal subunits, but not 50S ribosomal subunits or 70S ribosomes.

The protein localises to the cytoplasm. One of several proteins that assist in the late maturation steps of the functional core of the 30S ribosomal subunit. Associates with free 30S ribosomal subunits (but not with 30S subunits that are part of 70S ribosomes or polysomes). Required for efficient processing of 16S rRNA. May interact with the 5'-terminal helix region of 16S rRNA. This is Ribosome-binding factor A from Burkholderia ambifaria (strain MC40-6).